The following is a 38-amino-acid chain: Large ribosomal subunit protein bL36 (38 aa).

Belongs to the bacterial ribosomal protein bL36 family.

In Aster yellows witches'-broom phytoplasma (strain AYWB), this protein is Large ribosomal subunit protein bL36.